We begin with the raw amino-acid sequence, 343 residues long: 3-dehydroquinate synthase (343 aa).

NAD(+) contacts are provided by residues 61–66 (SGEKYK), 95–99 (GVISD), 119–120 (TT), K132, K141, and 159–162 (FLKT). Zn(2+) is bound by residues E174, H231, and H248.

The protein belongs to the sugar phosphate cyclases superfamily. Dehydroquinate synthase family. Requires Co(2+) as cofactor. Zn(2+) is required as a cofactor. The cofactor is NAD(+).

Its subcellular location is the cytoplasm. The catalysed reaction is 7-phospho-2-dehydro-3-deoxy-D-arabino-heptonate = 3-dehydroquinate + phosphate. The protein operates within metabolic intermediate biosynthesis; chorismate biosynthesis; chorismate from D-erythrose 4-phosphate and phosphoenolpyruvate: step 2/7. In terms of biological role, catalyzes the conversion of 3-deoxy-D-arabino-heptulosonate 7-phosphate (DAHP) to dehydroquinate (DHQ). The polypeptide is 3-dehydroquinate synthase (Helicobacter pylori (strain HPAG1)).